Here is a 701-residue protein sequence, read N- to C-terminus: Elongation factor G (701 aa).

One can recognise a tr-type G domain in the interval 8-286 (ERIRNIGIIA…AVVYYLPSPV (279 aa)). GTP is bound by residues 17–24 (AHIDAGKT), 85–89 (DTPGH), and 139–142 (NKMD).

It belongs to the TRAFAC class translation factor GTPase superfamily. Classic translation factor GTPase family. EF-G/EF-2 subfamily.

The protein localises to the cytoplasm. Its function is as follows. Catalyzes the GTP-dependent ribosomal translocation step during translation elongation. During this step, the ribosome changes from the pre-translocational (PRE) to the post-translocational (POST) state as the newly formed A-site-bound peptidyl-tRNA and P-site-bound deacylated tRNA move to the P and E sites, respectively. Catalyzes the coordinated movement of the two tRNA molecules, the mRNA and conformational changes in the ribosome. This chain is Elongation factor G, found in Roseiflexus castenholzii (strain DSM 13941 / HLO8).